Here is a 110-residue protein sequence, read N- to C-terminus: V-type proton ATPase subunit G 1 (110 aa).

This sequence belongs to the V-ATPase G subunit family. In terms of assembly, V-ATPase is a heteromultimeric enzyme composed of a peripheral catalytic V1 complex (components A to H) attached to an integral membrane V0 proton pore complex (components: a, c, c', c'' and d).

Catalytic subunit of the peripheral V1 complex of vacuolar ATPase (V-ATPase). V-ATPase is responsible for acidifying a variety of intracellular compartments in eukaryotic cells. This Nicotiana tabacum (Common tobacco) protein is V-type proton ATPase subunit G 1 (VATG1).